Here is a 140-residue protein sequence, read N- to C-terminus: Methylglyoxal synthase (140 aa).

The region spanning 1–140 (MKIALIAHDR…HDQDSNPINL (140 aa)) is the MGS-like domain. Substrate contacts are provided by residues His8, Lys12, 34-37 (TGTT), and 54-55 (SG). The active-site Proton donor/acceptor is Asp60. Position 87 (His87) interacts with substrate.

This sequence belongs to the methylglyoxal synthase family.

The catalysed reaction is dihydroxyacetone phosphate = methylglyoxal + phosphate. Functionally, catalyzes the formation of methylglyoxal from dihydroxyacetone phosphate. The protein is Methylglyoxal synthase of Latilactobacillus sakei subsp. sakei (strain 23K) (Lactobacillus sakei subsp. sakei).